The following is a 260-amino-acid chain: 3beta-hydroxysteroid dehydrogenase 2 (260 aa).

NAD(+)-binding positions include Asp-43, 69–70, Asn-96, Tyr-163, and Lys-167; that span reads DV. The Proton acceptor role is filled by Tyr-163.

Belongs to the short-chain dehydrogenases/reductases (SDR) family.

The enzyme catalyses 3-oxo-5beta-cholan-24-oate + NADH + H(+) = isolithocholate + NAD(+). It catalyses the reaction 12alpha-hydroxy-3-oxo-5beta-cholan-24-oate + NADH + H(+) = isodeoxycholate + NAD(+). It carries out the reaction 12alpha-hydroxy-3-oxo-5beta-cholan-24-oate + NADPH + H(+) = isodeoxycholate + NADP(+). The catalysed reaction is 7alpha,12alpha-dihydroxy-3-oxo-5beta-cholan-24-oate + NADH + H(+) = isocholate + NAD(+). The enzyme catalyses 3-oxochenodeoxycholate + NADH + H(+) = isochenodeoxycholate + NAD(+). In terms of biological role, involved in the modification of secondary bile acids into iso-bile acids (3beta-bile acids) via epimerization of the 3-OH group through a 3-oxo-intermediate. Catalyzes the reduction of 12-alpha-hydroxy-3-oxo-5-beta-cholan-24-oate (3-oxo-DCA) and 3-oxo-5-beta-cholan-24-oate (3-oxo-LCA) to yield isodeoxycholate (isoDCA) and isolithocholate (isoLCA), respectively. Is also able to catalyze the reduction of 3-dehydrocholate (3-oxo-CA or 7alpha,12alpha-dihydroxy-3-oxo-5beta-cholan-24-oate) and 7-alpha-hydroxy-3-oxo-5-beta-cholan-24-oate (3-oxo-CDCA), into isocholate (isoCA) and isochenodeoxycholate (isoCDCA), respectively. Accepts both NADH and NADPH as cosubstrates. The conversion of the abundant bile acid deoxycholate (DCA) into isoDCA by the gut bacterium E.lenta favors the growth of the keystone commensal genus Bacteroides, since isoDCA is less cytotoxic than its parent compound, DCA; iso-bile acids have thus a potential role in modulating gut community composition. This is 3beta-hydroxysteroid dehydrogenase 2 from Eggerthella lenta (strain ATCC 25559 / DSM 2243 / CCUG 17323 / JCM 9979 / KCTC 3265 / NCTC 11813 / VPI 0255 / 1899 B) (Eubacterium lentum).